A 117-amino-acid polypeptide reads, in one-letter code: Large ribosomal subunit protein uL18 (117 aa).

This sequence belongs to the universal ribosomal protein uL18 family. Part of the 50S ribosomal subunit; part of the 5S rRNA/L5/L18/L25 subcomplex. Contacts the 5S and 23S rRNAs.

This is one of the proteins that bind and probably mediate the attachment of the 5S RNA into the large ribosomal subunit, where it forms part of the central protuberance. The chain is Large ribosomal subunit protein uL18 from Phytoplasma mali (strain AT).